A 258-amino-acid polypeptide reads, in one-letter code: MVLIRVLANLLILQLSYAQKSSELVVGGDECNINEHRSLVVFFNSSGFLCGGTSINQEWVLTAAHCDSKNFQMLFGVHSKKILNEDEQTRDPKEKFICPNRKKDDERDKDIMLIRLDSPVSNSEHIAPLSLPSSPPSVGSVCRIMGWGTISPTKVTYPDVPHCANINILDHAVCRAAYPTLLAESSTVCAGTQQEGKDTCGGDSGGPLICNGQIQGIVSWRAHPCGQGLKPGVYTKVFDYTDWIQSIISGNTDVTCPP.

Residues 1-18 form the signal peptide; it reads MVLIRVLANLLILQLSYA. The propeptide occupies 19–24; it reads QKSSEL. The Peptidase S1 domain occupies 25 to 249; sequence VVGGDECNIN…YTDWIQSIIS (225 aa). Cystine bridges form between Cys-31-Cys-163, Cys-50-Cys-66, Cys-98-Cys-256, Cys-142-Cys-210, Cys-174-Cys-189, and Cys-200-Cys-225. An N-linked (GlcNAc...) asparagine glycan is attached at Asn-44. Residues His-65 and Asp-110 each act as charge relay system in the active site. Residue Ser-204 is the Charge relay system of the active site.

Belongs to the peptidase S1 family. Snake venom subfamily. As to quaternary structure, monomer. Expressed by the venom gland.

The protein localises to the secreted. In terms of biological role, snake venom serine protease that activates plasminogen. Shows a preferential cleavage at Arg-|-Xaa instead of Lys-|-Xaa bonds. The polypeptide is Venom plasminogen activator (Agkistrodon piscivorus leucostoma (Western cottonmouth)).